A 369-amino-acid polypeptide reads, in one-letter code: DNA replication and repair protein RecF (369 aa).

An ATP-binding site is contributed by 30–37; the sequence is GDNGSGKT.

Belongs to the RecF family.

It is found in the cytoplasm. The RecF protein is involved in DNA metabolism; it is required for DNA replication and normal SOS inducibility. RecF binds preferentially to single-stranded, linear DNA. It also seems to bind ATP. The chain is DNA replication and repair protein RecF from Pseudomonas aeruginosa (strain UCBPP-PA14).